The following is a 445-amino-acid chain: Chromosomal replication initiator protein DnaA (445 aa).

Residues 1-73 form a domain I, interacts with DnaA modulators region; sequence MSTHLTETWE…VNALKLLTSK (73 aa). The tract at residues 73–106 is domain II; that stretch reads KKYNIDFIVTTEEKIEKNHNNEKSNIVVNDEMST. A domain III, AAA+ region region spans residues 107-323; that stretch reads MLNPKYTFDS…GALIRIVAFS (217 aa). Gly151, Gly153, Lys154, and Thr155 together coordinate ATP. The tract at residues 324 to 445 is domain IV, binds dsDNA; that stretch reads SLTNKEISVD…KELNKRINQK (122 aa).

The protein belongs to the DnaA family. Oligomerizes as a right-handed, spiral filament on DNA at oriC.

It localises to the cytoplasm. Functionally, plays an essential role in the initiation and regulation of chromosomal replication. ATP-DnaA binds to the origin of replication (oriC) to initiate formation of the DNA replication initiation complex once per cell cycle. Binds the DnaA box (a 9 base pair repeat at the origin) and separates the double-stranded (ds)DNA. Forms a right-handed helical filament on oriC DNA; dsDNA binds to the exterior of the filament while single-stranded (ss)DNA is stabiized in the filament's interior. The ATP-DnaA-oriC complex binds and stabilizes one strand of the AT-rich DNA unwinding element (DUE), permitting loading of DNA polymerase. After initiation quickly degrades to an ADP-DnaA complex that is not apt for DNA replication. Binds acidic phospholipids. The polypeptide is Chromosomal replication initiator protein DnaA (Clostridium botulinum (strain Okra / Type B1)).